The chain runs to 404 residues: MGEHPSPGPAVAACAEAERIEELEPEAEERLPAAPEDHWKVLFDQFDPGNTGYISTGKFRSLLESHSSKLDPHKREVLLALADSHADGQIGYQDFVSLMSNKRSNSFRQAILQGNRRLSSKALLEEKGLSLSQRLIRHVAYETLPREIDRKWYYDSYTCCPPPWFMITVTLLEVAFFLYNGVSLGQFVLQVTHPRYLKNSLVYHPQLRAQVWRYLTYIFMHAGIEHLGLNVVLQLLVGVPLEMVHGATRIGLVYVAGVVAGSLAVSVADMTAPVVGSSGGVYALVSAHLANIVMNWSGMKCQFKLLRMAVALICMSMEFGRAVWLRFHPSAYPPCPHPSFVAHLGGVAVGITLGVVVLRNYEQRLQDQSLWWIFVAMYTVFVLFAVFWNIFAYTLLDLKLPPPP.

EF-hand domains are found at residues 34 to 69 (APED…HSSK) and 70 to 105 (LDPH…KRSN). 7 helical membrane passes run 164–184 (WFMI…GVSL), 218–238 (IFMH…LLVG), 250–270 (IGLV…VADM), 274–294 (VVGS…NIVM), 303–325 (FKLL…AVWL), 338–358 (PSFV…VVVL), and 371–391 (WWIF…WNIF). Serine 278 functions as the Nucleophile in the catalytic mechanism. Residue histidine 343 is part of the active site.

The protein belongs to the peptidase S54 family.

Its subcellular location is the membrane. It catalyses the reaction Cleaves type-1 transmembrane domains using a catalytic dyad composed of serine and histidine that are contributed by different transmembrane domains.. In terms of biological role, may be involved in regulated intramembrane proteolysis and the subsequent release of functional polypeptides from their membrane anchors. This chain is Rhomboid-related protein 3 (RHBDL3), found in Homo sapiens (Human).